Reading from the N-terminus, the 304-residue chain is Non-specific ribonucleoside hydrolase RihC (304 aa).

Histidine 233 is an active-site residue.

The protein belongs to the IUNH family. RihC subfamily.

Its function is as follows. Hydrolyzes both purine and pyrimidine ribonucleosides with a broad-substrate specificity. This Escherichia coli O127:H6 (strain E2348/69 / EPEC) protein is Non-specific ribonucleoside hydrolase RihC.